A 234-amino-acid polypeptide reads, in one-letter code: tRNA (guanine-N(1)-)-methyltransferase (234 aa).

S-adenosyl-L-methionine-binding positions include Gly-115 and 135–140; that span reads VGDYIL.

Belongs to the RNA methyltransferase TrmD family. As to quaternary structure, homodimer.

Its subcellular location is the cytoplasm. The catalysed reaction is guanosine(37) in tRNA + S-adenosyl-L-methionine = N(1)-methylguanosine(37) in tRNA + S-adenosyl-L-homocysteine + H(+). Specifically methylates guanosine-37 in various tRNAs. In Rickettsia africae (strain ESF-5), this protein is tRNA (guanine-N(1)-)-methyltransferase.